Reading from the N-terminus, the 778-residue chain is Lon protease (778 aa).

Residues 4-187 enclose the Lon N-terminal domain; the sequence is LPVLPLTDAV…LLVGWVRAHL (184 aa). 346–353 serves as a coordination point for ATP; that stretch reads GPPGVGKT. The 182-residue stretch at 581 to 762 folds into the Lon proteolytic domain; that stretch reads TAVPGVATGL…ADVLALALRP (182 aa). Catalysis depends on residues serine 668 and lysine 711.

Belongs to the peptidase S16 family. In terms of assembly, homohexamer. Organized in a ring with a central cavity.

It is found in the cytoplasm. The catalysed reaction is Hydrolysis of proteins in presence of ATP.. In terms of biological role, ATP-dependent serine protease that mediates the selective degradation of mutant and abnormal proteins as well as certain short-lived regulatory proteins. Required for cellular homeostasis and for survival from DNA damage and developmental changes induced by stress. Degrades polypeptides processively to yield small peptide fragments that are 5 to 10 amino acids long. Binds to DNA in a double-stranded, site-specific manner. In Salinispora arenicola (strain CNS-205), this protein is Lon protease.